The primary structure comprises 449 residues: Chromosomal replication initiator protein DnaA (449 aa).

The domain I, interacts with DnaA modulators stretch occupies residues 1 to 83; it reads MDDSLWSACL…VELEIGSPPT (83 aa). Residues 77–114 form a disordered region; the sequence is EIGSPPTPDQREAATGATRAAPAQRSSEPRQRPVDSNL. A domain II region spans residues 83 to 112; it reads TPDQREAATGATRAAPAQRSSEPRQRPVDS. A compositionally biased stretch (low complexity) spans 89 to 99; that stretch reads AATGATRAAPA. A domain III, AAA+ region region spans residues 113–329; the sequence is NLNPGFTFDS…GALRRITANA (217 aa). Residues Gly-157, Gly-159, Lys-160, and Thr-161 each contribute to the ATP site. Positions 330–449 are domain IV, binds dsDNA; sequence QFTGRAIDVD…YDNLLRTLST (120 aa).

Belongs to the DnaA family. In terms of assembly, oligomerizes as a right-handed, spiral filament on DNA at oriC.

Its subcellular location is the cytoplasm. Its function is as follows. Plays an essential role in the initiation and regulation of chromosomal replication. ATP-DnaA binds to the origin of replication (oriC) to initiate formation of the DNA replication initiation complex once per cell cycle. Binds the DnaA box (a 9 base pair repeat at the origin) and separates the double-stranded (ds)DNA. Forms a right-handed helical filament on oriC DNA; dsDNA binds to the exterior of the filament while single-stranded (ss)DNA is stabiized in the filament's interior. The ATP-DnaA-oriC complex binds and stabilizes one strand of the AT-rich DNA unwinding element (DUE), permitting loading of DNA polymerase. After initiation quickly degrades to an ADP-DnaA complex that is not apt for DNA replication. Binds acidic phospholipids. This chain is Chromosomal replication initiator protein DnaA, found in Halorhodospira halophila (strain DSM 244 / SL1) (Ectothiorhodospira halophila (strain DSM 244 / SL1)).